The chain runs to 294 residues: Large ribosomal subunit protein uL18 (294 aa).

Residues 247 to 275 (RADPSPSAKKAAKPSKRHTAKRLTYDERK) are disordered. The span at 256-267 (KAAKPSKRHTAK) shows a compositional bias: basic residues.

The protein belongs to the universal ribosomal protein uL18 family. As to quaternary structure, component of the large ribosomal subunit (LSU).

The protein resides in the cytoplasm. The protein localises to the nucleus. Functionally, component of the ribosome, a large ribonucleoprotein complex responsible for the synthesis of proteins in the cell. The small ribosomal subunit (SSU) binds messenger RNAs (mRNAs) and translates the encoded message by selecting cognate aminoacyl-transfer RNA (tRNA) molecules. The large subunit (LSU) contains the ribosomal catalytic site termed the peptidyl transferase center (PTC), which catalyzes the formation of peptide bonds, thereby polymerizing the amino acids delivered by tRNAs into a polypeptide chain. The nascent polypeptides leave the ribosome through a tunnel in the LSU and interact with protein factors that function in enzymatic processing, targeting, and the membrane insertion of nascent chains at the exit of the ribosomal tunnel. The polypeptide is Large ribosomal subunit protein uL18 (rpl-5) (Caenorhabditis briggsae).